The primary structure comprises 2326 residues: Probable voltage-dependent N-type calcium channel subunit alpha-1B (2326 aa).

The Cytoplasmic portion of the chain corresponds to 1-83 (MARLGNDVPA…DNIIRKYAKR (83 aa)). The disordered stretch occupies residues 17-37 (AGGGRGANRHAGPQAGQRGMY). The I repeat unit spans residues 75–351 (NIIRKYAKRI…LVLGVLSGEF (277 aa)). The chain crosses the membrane as a helical span at residues 84–107 (ITEWPPFEYMILATIIANCIVLAL). The Extracellular segment spans residues 108–124 (EQHLPDGDKTPMSERLD). The helical transmembrane segment at 125–145 (DTEPYFIGIFCFEAGIKIIAL) threads the bilayer. At 146 to 156 (GFAFHKGSYLR) the chain is on the cytoplasmic side. Residues 157 to 175 (NGWNVMDFVVVLTGILTTI) traverse the membrane as a helical segment. At 176 to 180 (GTDFD) the chain is on the extracellular side. Residues 181–204 (LRTLRAVRVLRPLKLVSGIPSLQV) traverse the membrane as a helical segment. Over 205–214 (VLKSIMKAMV) the chain is Cytoplasmic. The helical transmembrane segment at 215–237 (PLLQIGLLLFFAILMFAIIGLEF) threads the bilayer. The Extracellular portion of the chain corresponds to 238–323 (YMGKFHKTCF…TANDALGNTW (86 aa)). The N-linked (GlcNAc...) asparagine glycan is linked to Asn271. Residues 324–348 (NWLYFIPLIVIGSFFMLNLVLGVLS) traverse the membrane as a helical segment. The Cytoplasmic portion of the chain corresponds to 349–472 (GEFAKERERV…FFIRRMVKSQ (124 aa)). The segment at 371-388 (QQVEQEFNRYLRWIHIAE) is binding to the beta subunit. One copy of the II repeat lies at 458–702 (EKRFRFFIRR…VFLAIAVDNL (245 aa)). A helical membrane pass occupies residues 473–491 (SFYWIVLCLVGLNTLCVAI). Residues 492 to 501 (VHYDQPPLLT) are Extracellular-facing. Residues 502–524 (DALYFAEFVFLGLFLTEMSLKMY) traverse the membrane as a helical segment. The Cytoplasmic segment spans residues 525–534 (GLGPRNYFHS). Ser534 provides a ligand contact to a 1,2-diacyl-sn-glycero-3-phospho-(1D-myo-inositol-4,5-bisphosphate). The chain crosses the membrane as a helical span at residues 535 to 556 (SFNCFDFGVIVGSIFEVVWTAV). Residues 557–563 (KPDTSFG) are Extracellular-facing. Residues 564–576 (ISVLRALRLLRIF) traverse the membrane as a helical segment. A 1,2-diacyl-sn-glycero-3-phospho-(1D-myo-inositol-4,5-bisphosphate) is bound by residues Arg574 and Lys577. At 577-594 (KVTKYWNSLRNLVVSLLN) the chain is on the cytoplasmic side. The helical transmembrane segment at 595–620 (SMKSIISLLFLLFLFIVVFALLGMQL) threads the bilayer. The Extracellular portion of the chain corresponds to 621–672 (FGGQFNFEDGTPPTNFDTFPAAILTVFQILTGEDWNEVMYYGIEAHGGVKKG). A helical membrane pass occupies residues 673–699 (MFSSVYFIILTLFGNYTLLNVFLAIAV). Topologically, residues 700–1148 (DNLANAQELT…ACHYIVNLRY (449 aa)) are cytoplasmic. A disordered region spans residues 793 to 1048 (SHQIRPDMKT…LQHLPQQPED (256 aa)). Basic and acidic residues-rich tracts occupy residues 796–808 (IRPD…DRPL), 854–879 (KLGE…DDKR), 886–908 (SKET…SHEG), 935–979 (HGTE…EGAE), and 994–1011 (SEEK…VLRE). The span at 1020–1032 (TQPSQDSGTQGNV) shows a compositional bias: polar residues. The stretch at 1134–1416 (NPVRRACHYI…IFVALIIITF (283 aa)) is one III repeat. Residues 1149-1167 (FEMCILLVITMSSIALAAE) traverse the membrane as a helical segment. Topologically, residues 1168–1175 (DPVQGDAP) are extracellular. Residues 1176–1200 (RNNVLKYLDYVFTGVFTFEMVIKMI) traverse the membrane as a helical segment. Residues 1201-1214 (NLGLILHPGSYFRD) lie on the Cytoplasmic side of the membrane. A helical transmembrane segment spans residues 1215–1235 (LWNILDFIVVSGALVAFAFTG). Over 1236–1241 (SRGKDL) the chain is Extracellular. The chain crosses the membrane as a helical span at residues 1242-1262 (NTIKSLRVLRVLRPLKTIKRL). Topologically, residues 1263-1280 (PKLKAVFDCVVNSLKNVL) are cytoplasmic. The helical transmembrane segment at 1281–1300 (NILIVYMLFMFIFAVIAVQL) threads the bilayer. The Extracellular portion of the chain corresponds to 1301–1387 (FKGKFFYCTD…DQGPSPSYRM (87 aa)). The chain crosses the membrane as a helical span at residues 1388 to 1413 (EMSIFYVVYFVVFPFFFVNIFVALII). The Cytoplasmic portion of the chain corresponds to 1414–1468 (ITFQEQGDKVMSDCSLEKNERACIDFAISAKPLTRYMPQNKQTFQYKMWKFVVSP). An IV repeat occupies 1453–1708 (NKQTFQYKMW…LFVAVIMDNF (256 aa)). Residues 1469-1487 (PFEYLIMALIALNTIVLMM) form a helical membrane-spanning segment. The Extracellular segment spans residues 1488–1495 (KFYNAPDP). Residues 1496 to 1520 (YDRMLQYLNILFTFLFSMECVLKLI) traverse the membrane as a helical segment. Over 1521–1530 (GFGVLNYFRD) the chain is Cytoplasmic. Residues 1531–1552 (AWNVFDFVTVLGSITDILVTEL) form a helical membrane-spanning segment. Residues 1553–1558 (ADSFIN) lie on the Extracellular side of the membrane. The N-linked (GlcNAc...) asparagine glycan is linked to Asn1558. The chain crosses the membrane as a helical span at residues 1559–1577 (LSFLRLFRAARLIKLLRQG). The Cytoplasmic segment spans residues 1578 to 1596 (YTIRILLWTFVQSFKALPY). Residues 1597 to 1616 (VCLLIAMLFFIYAIIGMQVF) form a helical membrane-spanning segment. Topologically, residues 1617-1680 (GNIELDDDGA…IDGDECGSNF (64 aa)) are extracellular. The chain crosses the membrane as a helical span at residues 1681–1704 (AYFYFVSFIFFSSFLMLNLFVAVI). The Cytoplasmic portion of the chain corresponds to 1705-2326 (MDNFEYLTRD…YRETDEDDWC (622 aa)). An EF-hand domain is found at 1721–1756 (HHLDEFIRVWAEYDPGARGRITYNDMYEMLRHMCPP). Residues Asp1734, Arg1740, and Asp1745 each coordinate Ca(2+). The segment covering 1897–1912 (EEPSSYSTSHKNSVNP) has biased composition (polar residues). Disordered regions lie at residues 1897 to 1916 (EEPS…LYQG), 1932 to 1954 (CAEG…KSSS), 2039 to 2242 (PHHH…SSDP), and 2271 to 2326 (TTAT…DDWC). Residues 1932-1948 (CAEGKKEVPESHPEEAG) show a composition bias toward basic and acidic residues. Residues 2039–2055 (PHHHHHHHRCHHRREKK) are compositionally biased toward basic residues. 2 stretches are compositionally biased toward basic and acidic residues: residues 2056–2069 (QRSL…HADE) and 2077–2104 (QLRD…EKQR). Composition is skewed to polar residues over residues 2142–2161 (GSGS…STPS), 2275–2289 (GRSP…QPPQ), and 2302–2311 (GRSTGPSTAA).

Belongs to the calcium channel alpha-1 subunit (TC 1.A.1.11) family. In terms of assembly, multisubunit complex consisting of alpha-1, alpha-2, beta and delta subunits in a 1:1:1:1 ratio. The channel activity is directed by the pore-forming and voltage-sensitive alpha-1 subunit. In many cases, this subunit is sufficient to generate voltage-sensitive calcium channel activity. The auxiliary subunits beta and alpha-2/delta linked by a disulfide bridge regulate the channel activity. Phosphorylated in vitro by CaM-kinase II, PKA, PKC and CGPK. In terms of tissue distribution, expression is higher in the electric lobe than in the forebrain.

It is found in the membrane. The isoform alpha-1B gives rise to N-type calcium currents. N-type calcium channels belong to the 'high-voltage activated' (HVA) group. In Diplobatis ommata (Ocellated electric ray), this protein is Probable voltage-dependent N-type calcium channel subunit alpha-1B.